The primary structure comprises 161 residues: DNA endonuclease I-CvuI (161 aa).

It belongs to the LAGLIDADG endonuclease family.

The protein localises to the plastid. The protein resides in the chloroplast. Probable endonuclease involved in intron homing. The protein is DNA endonuclease I-CvuI of Chlorella vulgaris (Green alga).